The primary structure comprises 739 residues: Gamma-tubulin complex component 4 homolog (739 aa).

The protein belongs to the TUBGCP family.

Its subcellular location is the cytoplasm. It localises to the cytoskeleton. The protein resides in the microtubule organizing center. Gamma-tubulin complex is necessary for microtubule nucleation at the microtubule organizing centers (MTOCs). In Medicago truncatula (Barrel medic), this protein is Gamma-tubulin complex component 4 homolog (85P).